Consider the following 413-residue polypeptide: Probable inactive allantoicase (413 aa).

The protein belongs to the allantoicase family.

Its function is as follows. The function of this enzyme is unclear as allantoicase activity is not known to exist in mammals. The protein is Probable inactive allantoicase of Rattus norvegicus (Rat).